The sequence spans 144 residues: uncharacterized protein (144 aa).

Residues 24 to 67 (KLKELYQRLNQGINVEEVLKETVEDYKEKMEKYILEVLEEIEKY) are a coiled coil.

This is an uncharacterized protein from Aquifex aeolicus (strain VF5).